The primary structure comprises 226 residues: 3-dehydroquinate dehydratase (226 aa).

Residues 33-35 (EWR) and Arg-65 each bind 3-dehydroquinate. The Proton donor/acceptor role is filled by His-121. Lys-146 functions as the Schiff-base intermediate with substrate in the catalytic mechanism. Arg-188, Ser-207, and Gln-211 together coordinate 3-dehydroquinate.

The protein belongs to the type-I 3-dehydroquinase family. As to quaternary structure, homodimer.

It catalyses the reaction 3-dehydroquinate = 3-dehydroshikimate + H2O. It participates in metabolic intermediate biosynthesis; chorismate biosynthesis; chorismate from D-erythrose 4-phosphate and phosphoenolpyruvate: step 3/7. In terms of biological role, involved in the third step of the chorismate pathway, which leads to the biosynthesis of aromatic amino acids. Catalyzes the cis-dehydration of 3-dehydroquinate (DHQ) and introduces the first double bond of the aromatic ring to yield 3-dehydroshikimate. The chain is 3-dehydroquinate dehydratase from Lactococcus lactis subsp. lactis (strain IL1403) (Streptococcus lactis).